We begin with the raw amino-acid sequence, 299 residues long: Nucleotide-binding protein AFE_3021 (299 aa).

Residue 11–18 (GLSGSGKS) participates in ATP binding. A GTP-binding site is contributed by 62-65 (DVRN).

It belongs to the RapZ-like family.

Displays ATPase and GTPase activities. The polypeptide is Nucleotide-binding protein AFE_3021 (Acidithiobacillus ferrooxidans (strain ATCC 23270 / DSM 14882 / CIP 104768 / NCIMB 8455) (Ferrobacillus ferrooxidans (strain ATCC 23270))).